A 384-amino-acid chain; its full sequence is N-acetyldiaminopimelate deacetylase (384 aa).

Residue aspartate 74 is part of the active site. The Proton acceptor role is filled by glutamate 133.

Belongs to the peptidase M20A family. N-acetyldiaminopimelate deacetylase subfamily.

It catalyses the reaction N-acetyl-(2S,6S)-2,6-diaminopimelate + H2O = (2S,6S)-2,6-diaminopimelate + acetate. Its pathway is amino-acid biosynthesis; L-lysine biosynthesis via DAP pathway; LL-2,6-diaminopimelate from (S)-tetrahydrodipicolinate (acetylase route): step 3/3. Its function is as follows. Catalyzes the conversion of N-acetyl-diaminopimelate to diaminopimelate and acetate. The protein is N-acetyldiaminopimelate deacetylase of Lactiplantibacillus plantarum (strain ATCC BAA-793 / NCIMB 8826 / WCFS1) (Lactobacillus plantarum).